Consider the following 454-residue polypeptide: UPF0210 protein Ppro_0613 (454 aa).

This sequence belongs to the UPF0210 family. In terms of assembly, homodimer.

This chain is UPF0210 protein Ppro_0613, found in Pelobacter propionicus (strain DSM 2379 / NBRC 103807 / OttBd1).